Here is a 141-residue protein sequence, read N- to C-terminus: Hemoglobin subunit alpha-1 (141 aa).

The Globin domain maps to 1-141; that stretch reads VLTDEDKARV…LSKDLVSKYR (141 aa). His-58 is an O2 binding site. His-87 provides a ligand contact to heme b.

It belongs to the globin family. As to quaternary structure, heterotetramer of two alpha chains and two beta chains. In terms of tissue distribution, red blood cells.

Involved in oxygen transport from the lung to the various peripheral tissues. The sequence is that of Hemoglobin subunit alpha-1 from Naja naja (Indian cobra).